Here is a 201-residue protein sequence, read N- to C-terminus: Adenylyl-sulfate kinase (201 aa).

35–42 (GLSGSGKS) is an ATP binding site. Serine 109 (phosphoserine intermediate) is an active-site residue.

This sequence belongs to the APS kinase family.

It carries out the reaction adenosine 5'-phosphosulfate + ATP = 3'-phosphoadenylyl sulfate + ADP + H(+). Its pathway is sulfur metabolism; hydrogen sulfide biosynthesis; sulfite from sulfate: step 2/3. In terms of biological role, catalyzes the synthesis of activated sulfate. This chain is Adenylyl-sulfate kinase, found in Salmonella typhi.